A 1457-amino-acid polypeptide reads, in one-letter code: Eye-specific diacylglycerol kinase (1457 aa).

3 disordered regions span residues 1–123 (MQQQ…SSEA), 136–177 (RSHS…PPCI), and 207–339 (YSNT…QPTT). 3 stretches are compositionally biased toward low complexity: residues 22–62 (SATT…LRTT), 98–115 (SQRA…SSAS), and 141–154 (DSAT…DSGT). The span at 214 to 253 (ASEDEDEVEGHNAEEEEEGSAAIEDAEEETTEAATEEADE) shows a compositional bias: acidic residues. Over residues 254 to 266 (DPRTEVESEHDHD) the composition is skewed to basic and acidic residues. Over residues 294 to 303 (RLPRQMRRHT) the composition is skewed to basic residues. 2 Phorbol-ester/DAG-type zinc fingers span residues 591–641 (HYWK…TLAC) and 661–724 (HHWV…GEEC). The disordered stretch occupies residues 758–799 (NNAASGSGGGGAGGGAGGGGGKSKKQTQRRQKGKEEKKEPRA). Residues 763–778 (GSGGGGAGGGAGGGGG) are compositionally biased toward gly residues. Residues 779–789 (KSKKQTQRRQK) show a composition bias toward basic residues. The DAGKc domain maps to 808–944 (PEVIPVIVFI…MDRWRVKVTP (137 aa)). The interval 1264-1302 (TPDQERSFAAFSQRQAQNERRQMDQAQGRGPGSTDEDLQ) is disordered. ANK repeat units lie at residues 1320-1349 (QTSD…SLQS), 1353-1382 (NGQT…RRLI), 1389-1418 (LGQT…HLDT), and 1422-1451 (GGNT…TQPV).

It belongs to the eukaryotic diacylglycerol kinase family. Expressed specifically in adult eye.

It localises to the membrane. The catalysed reaction is a 1,2-diacyl-sn-glycerol + ATP = a 1,2-diacyl-sn-glycero-3-phosphate + ADP + H(+). Its function is as follows. Required for the maintenance of phospholipid turnover within the photoreceptor. This is Eye-specific diacylglycerol kinase (rdgA) from Drosophila melanogaster (Fruit fly).